The primary structure comprises 173 residues: Cytochrome c-type biogenesis protein CcmE (173 aa).

Over 1 to 8 (MNPRRKSR) the chain is Cytoplasmic. Residues 9–29 (FKLVIFVVLGIAIASGLMLYA) form a helical; Signal-anchor for type II membrane protein membrane-spanning segment. Over 30–173 (LRQNIDLFYT…RDRQEKEGAK (144 aa)) the chain is Periplasmic. Heme is bound by residues H131 and Y135. The disordered stretch occupies residues 139-173 (ELGEKMQKVHKPMGIKAADLKGESERDRQEKEGAK). Residues 156–173 (ADLKGESERDRQEKEGAK) show a composition bias toward basic and acidic residues.

It belongs to the CcmE/CycJ family.

The protein resides in the cell inner membrane. Heme chaperone required for the biogenesis of c-type cytochromes. Transiently binds heme delivered by CcmC and transfers the heme to apo-cytochromes in a process facilitated by CcmF and CcmH. The sequence is that of Cytochrome c-type biogenesis protein CcmE from Haemophilus influenzae (strain 86-028NP).